A 505-amino-acid chain; its full sequence is ATP synthase subunit alpha, chloroplastic (505 aa).

Position 170–177 (170–177) interacts with ATP; sequence GDRQTGKT.

Belongs to the ATPase alpha/beta chains family. F-type ATPases have 2 components, CF(1) - the catalytic core - and CF(0) - the membrane proton channel. CF(1) has five subunits: alpha(3), beta(3), gamma(1), delta(1), epsilon(1). CF(0) has four main subunits: a, b, b' and c.

It is found in the plastid. The protein resides in the chloroplast thylakoid membrane. It catalyses the reaction ATP + H2O + 4 H(+)(in) = ADP + phosphate + 5 H(+)(out). Produces ATP from ADP in the presence of a proton gradient across the membrane. The alpha chain is a regulatory subunit. The protein is ATP synthase subunit alpha, chloroplastic of Carica papaya (Papaya).